Here is a 550-residue protein sequence, read N- to C-terminus: Probable methionine--tRNA ligase, cytoplasmic (550 aa).

Residues 10 to 20 carry the 'HIGH' region motif; sequence PYVNNQPHLGN. The short motif at 328–332 is the 'KMSKS' region element; it reads KFSKS. Lys331 contributes to the ATP binding site.

It belongs to the class-I aminoacyl-tRNA synthetase family.

Its subcellular location is the cytoplasm. It carries out the reaction tRNA(Met) + L-methionine + ATP = L-methionyl-tRNA(Met) + AMP + diphosphate. This is Probable methionine--tRNA ligase, cytoplasmic from Encephalitozoon cuniculi (strain GB-M1) (Microsporidian parasite).